The chain runs to 535 residues: T-complex protein 1 subunit beta (535 aa).

At alanine 2 the chain carries N-acetylalanine. Serine 3 is subject to Phosphoserine. Position 13 is an N6-acetyllysine (lysine 13). Glycine 44 is an ADP binding site. Glycine 44 contributes to the ATP binding site. Serine 60 carries the phosphoserine modification. Residue aspartate 97 coordinates Mg(2+). Residues glycine 98, threonine 99, threonine 100, and serine 101 each contribute to the ADP site. ATP-binding residues include glycine 98, threonine 99, and threonine 100. An N6-acetyllysine modification is found at lysine 154. Positions 168 and 169 each coordinate ADP. N6-acetyllysine is present on lysine 181. Lysine 248 is covalently cross-linked (Glycyl lysine isopeptide (Lys-Gly) (interchain with G-Cter in SUMO2)). A Phosphoserine modification is found at serine 260. Threonine 261 is subject to Phosphothreonine. ADP is bound by residues glycine 410, glutamate 495, and lysine 500. Glutamate 495 and lysine 500 together coordinate ATP.

It belongs to the TCP-1 chaperonin family. Component of the chaperonin-containing T-complex (TRiC), a hexadecamer composed of two identical back-to-back stacked rings enclosing a protein folding chamber. Each ring is made up of eight different subunits: TCP1/CCT1, CCT2, CCT3, CCT4, CCT5, CCT6A/CCT6, CCT7, CCT8. Interacts with PACRG. Interacts with FLCN. Interacts with DLEC1. Interacts with SVEP1.

The protein resides in the cytoplasm. The enzyme catalyses ATP + H2O = ADP + phosphate + H(+). In terms of biological role, component of the chaperonin-containing T-complex (TRiC), a molecular chaperone complex that assists the folding of actin, tubulin and other proteins upon ATP hydrolysis. The TRiC complex mediates the folding of WRAP53/TCAB1, thereby regulating telomere maintenance. As part of the TRiC complex may play a role in the assembly of BBSome, a complex involved in ciliogenesis regulating transports vesicles to the cilia. The sequence is that of T-complex protein 1 subunit beta (CCT2) from Bos taurus (Bovine).